The chain runs to 198 residues: Nucleoid occlusion factor SlmA (198 aa).

One can recognise an HTH tetR-type domain in the interval 9–70 (RNRREEILQA…SLIEFIEDSL (62 aa)). Positions 33–52 (TTAKLAANVGVSEAALYRHF) form a DNA-binding region, H-T-H motif. Residues 113–144 (ALMFEQDRLQDRINQLFERIESQLRQVLREHK) adopt a coiled-coil conformation.

The protein belongs to the nucleoid occlusion factor SlmA family. As to quaternary structure, homodimer. Interacts with FtsZ.

The protein localises to the cytoplasm. It is found in the nucleoid. In terms of biological role, required for nucleoid occlusion (NO) phenomenon, which prevents Z-ring formation and cell division over the nucleoid. Acts as a DNA-associated cell division inhibitor that binds simultaneously chromosomal DNA and FtsZ, and disrupts the assembly of FtsZ polymers. SlmA-DNA-binding sequences (SBS) are dispersed on non-Ter regions of the chromosome, preventing FtsZ polymerization at these regions. In Pectobacterium carotovorum subsp. carotovorum (strain PC1), this protein is Nucleoid occlusion factor SlmA.